We begin with the raw amino-acid sequence, 110 residues long: Large ribosomal subunit protein uL22 (110 aa).

The protein belongs to the universal ribosomal protein uL22 family. In terms of assembly, part of the 50S ribosomal subunit.

This protein binds specifically to 23S rRNA; its binding is stimulated by other ribosomal proteins, e.g. L4, L17, and L20. It is important during the early stages of 50S assembly. It makes multiple contacts with different domains of the 23S rRNA in the assembled 50S subunit and ribosome. Functionally, the globular domain of the protein is located near the polypeptide exit tunnel on the outside of the subunit, while an extended beta-hairpin is found that lines the wall of the exit tunnel in the center of the 70S ribosome. In Pseudomonas savastanoi pv. phaseolicola (strain 1448A / Race 6) (Pseudomonas syringae pv. phaseolicola (strain 1448A / Race 6)), this protein is Large ribosomal subunit protein uL22.